The chain runs to 272 residues: NADPH-dependent 7-cyano-7-deazaguanine reductase (272 aa).

Residue 82–84 (IES) participates in substrate binding. 84-85 (SK) provides a ligand contact to NADPH. Cys-178 acts as the Thioimide intermediate in catalysis. The Proton donor role is filled by Asp-185. 217–218 (HE) lines the substrate pocket. 246–247 (RG) serves as a coordination point for NADPH.

Belongs to the GTP cyclohydrolase I family. QueF type 2 subfamily. In terms of assembly, homodimer.

The protein resides in the cytoplasm. It catalyses the reaction 7-aminomethyl-7-carbaguanine + 2 NADP(+) = 7-cyano-7-deazaguanine + 2 NADPH + 3 H(+). The protein operates within tRNA modification; tRNA-queuosine biosynthesis. Catalyzes the NADPH-dependent reduction of 7-cyano-7-deazaguanine (preQ0) to 7-aminomethyl-7-deazaguanine (preQ1). In Stenotrophomonas maltophilia (strain K279a), this protein is NADPH-dependent 7-cyano-7-deazaguanine reductase.